A 493-amino-acid chain; its full sequence is Cobyric acid synthase (493 aa).

The region spanning 260–427 (RLSVAAIRLP…RHGYLQDDPA (168 aa)) is the GATase cobBQ-type domain. Residue histidine 419 is part of the active site.

The protein belongs to the CobB/CobQ family. CobQ subfamily.

The protein operates within cofactor biosynthesis; adenosylcobalamin biosynthesis. Its function is as follows. Catalyzes amidations at positions B, D, E, and G on adenosylcobyrinic A,C-diamide. NH(2) groups are provided by glutamine, and one molecule of ATP is hydrogenolyzed for each amidation. This chain is Cobyric acid synthase, found in Corynebacterium efficiens (strain DSM 44549 / YS-314 / AJ 12310 / JCM 11189 / NBRC 100395).